We begin with the raw amino-acid sequence, 361 residues long: Nicotinate-nucleotide--dimethylbenzimidazole phosphoribosyltransferase (361 aa).

E315 acts as the Proton acceptor in catalysis.

The protein belongs to the CobT family.

The catalysed reaction is 5,6-dimethylbenzimidazole + nicotinate beta-D-ribonucleotide = alpha-ribazole 5'-phosphate + nicotinate + H(+). Its pathway is nucleoside biosynthesis; alpha-ribazole biosynthesis; alpha-ribazole from 5,6-dimethylbenzimidazole: step 1/2. In terms of biological role, catalyzes the synthesis of alpha-ribazole-5'-phosphate from nicotinate mononucleotide (NAMN) and 5,6-dimethylbenzimidazole (DMB). This Clostridium perfringens (strain ATCC 13124 / DSM 756 / JCM 1290 / NCIMB 6125 / NCTC 8237 / Type A) protein is Nicotinate-nucleotide--dimethylbenzimidazole phosphoribosyltransferase.